We begin with the raw amino-acid sequence, 549 residues long: Glucose-6-phosphate isomerase (549 aa).

Catalysis depends on E353, which acts as the Proton donor. Residues H384 and K510 contribute to the active site.

It belongs to the GPI family.

The protein localises to the cytoplasm. The catalysed reaction is alpha-D-glucose 6-phosphate = beta-D-fructose 6-phosphate. It participates in carbohydrate biosynthesis; gluconeogenesis. Its pathway is carbohydrate degradation; glycolysis; D-glyceraldehyde 3-phosphate and glycerone phosphate from D-glucose: step 2/4. Catalyzes the reversible isomerization of glucose-6-phosphate to fructose-6-phosphate. The protein is Glucose-6-phosphate isomerase of Mycolicibacterium smegmatis (strain ATCC 700084 / mc(2)155) (Mycobacterium smegmatis).